Reading from the N-terminus, the 527-residue chain is MLMLLVFGVLLHEVPLSGQDEAHPEADRVPGEALYDYSSLRLPEEHIPFFLHSNRHVASVCREDSHCPYKKHLESLNSCWGYEKSCTPESRFGSPICSYVDLGWTDTLESAQDMFWKQADFGYARERLEEIRMFCRPESASDSSLLCSRYLQYCRATGLYLDLRNIKRNHDRFKEDFLQGGDIGGYCKLDRHALVSEGQRKSPLQSWFAELQGYTQLNFRPIEDAKCDIVVEKPTYFMKLDAGINMYHHFCDFLNLYLTQHINNSFSTDVYIVMWDTSSYGYGDLFSDTWKAFTDYDVIHLKTYDSKKVCFKEAVFSLLPRMRYGLFYNTPLISGCQNTGLFRAFSQHVLHRLNISQEGPKDGKLRVTILARSTEYRKILNQNELVNALKTVSTFEVRVVDYKYRELGFLDQLRITHNTDIFIGMHGAGLTHLLFLPDWAAVFELYNCEDERCYLDLARLRGIYYITWQKPSKVFPQDKGHHPTLGEHPKFTNYSFDVEEFMYLVLQAAEHVLQHPQWPLKKNHDEL.

The first 19 residues, 1–19, serve as a signal peptide directing secretion; that stretch reads MLMLLVFGVLLHEVPLSGQ. A Required for optimal activity motif is present at residues 295-297; the sequence is DYD. Residue asparagine 354 is glycosylated (N-linked (GlcNAc...) asparagine). A Prevents secretion from ER motif is present at residues 524–527; sequence HDEL.

It belongs to the glycosyltransferase 61 family.

The protein resides in the endoplasmic reticulum lumen. It carries out the reaction L-seryl-[protein] + UDP-N-acetyl-alpha-D-glucosamine = 3-O-(N-acetyl-beta-D-glucosaminyl)-L-seryl-[protein] + UDP + H(+). The catalysed reaction is L-threonyl-[protein] + UDP-N-acetyl-alpha-D-glucosamine = 3-O-(N-acetyl-beta-D-glucosaminyl)-L-threonyl-[protein] + UDP + H(+). In terms of biological role, catalyzes the transfer of a single N-acetylglucosamine from UDP-GlcNAc to a serine or threonine residue in extracellular proteins resulting in their modification with a beta-linked N-acetylglucosamine (O-GlcNAc). Specifically glycosylates the Thr residue located between the fifth and sixth conserved cysteines of folded EGF-like domains. In Rattus norvegicus (Rat), this protein is EGF domain-specific O-linked N-acetylglucosamine transferase (Eogt).